A 318-amino-acid chain; its full sequence is UDP-N-acetylenolpyruvoylglucosamine reductase (318 aa).

The region spanning 38–204 (IGGVCPVIVE…LGIEILLKEG (167 aa)) is the FAD-binding PCMH-type domain. Residue Arg-182 is part of the active site. The segment covering 212 to 229 (SLKDKRDRRNSSQPENKK) has biased composition (basic and acidic residues). The segment at 212–232 (SLKDKRDRRNSSQPENKKSAG) is disordered. The Proton donor role is filled by Ser-233. The active site involves Glu-310.

This sequence belongs to the MurB family. The cofactor is FAD.

It localises to the cytoplasm. It catalyses the reaction UDP-N-acetyl-alpha-D-muramate + NADP(+) = UDP-N-acetyl-3-O-(1-carboxyvinyl)-alpha-D-glucosamine + NADPH + H(+). It functions in the pathway cell wall biogenesis; peptidoglycan biosynthesis. Cell wall formation. The protein is UDP-N-acetylenolpyruvoylglucosamine reductase of Leptospira interrogans serogroup Icterohaemorrhagiae serovar copenhageni (strain Fiocruz L1-130).